The following is a 168-amino-acid chain: RNA annealing protein YRA2 (168 aa).

The region spanning 40-114 (FRLKITNIGL…KSIQVTLLDQ (75 aa)) is the RRM domain. A disordered region spans residues 113–152 (DQQKRKRDADQERRKLRHGPRGGYGSHYTKSQKPIEQRNK).

The protein belongs to the YRA1 family. In terms of assembly, associates with mRNPs.

The protein localises to the nucleus. Functionally, involved in export of poly(A) mRNAs from the nucleus. Recruited to the coding sequences as well as poly-A sites of active genes. In Candida glabrata (strain ATCC 2001 / BCRC 20586 / JCM 3761 / NBRC 0622 / NRRL Y-65 / CBS 138) (Yeast), this protein is RNA annealing protein YRA2 (YRA2).